Here is a 335-residue protein sequence, read N- to C-terminus: Ornithine carbamoyltransferase (335 aa).

Carbamoyl phosphate is bound by residues 56–59 (STRT), glutamine 83, arginine 107, and 134–137 (HPTQ). L-ornithine is bound by residues asparagine 168, aspartate 232, and 236–237 (SM). Residues 274–275 (CL) and arginine 320 each bind carbamoyl phosphate.

Belongs to the aspartate/ornithine carbamoyltransferase superfamily. OTCase family.

The protein resides in the cytoplasm. It carries out the reaction carbamoyl phosphate + L-ornithine = L-citrulline + phosphate + H(+). The protein operates within amino-acid biosynthesis; L-arginine biosynthesis; L-arginine from L-ornithine and carbamoyl phosphate: step 1/3. In terms of biological role, reversibly catalyzes the transfer of the carbamoyl group from carbamoyl phosphate (CP) to the N(epsilon) atom of ornithine (ORN) to produce L-citrulline. This chain is Ornithine carbamoyltransferase, found in Yersinia pestis bv. Antiqua (strain Nepal516).